The sequence spans 299 residues: Phosphatidylserine decarboxylase proenzyme (299 aa).

Catalysis depends on charge relay system; for autoendoproteolytic cleavage activity residues Asp115, His171, and Ser258. The active-site Schiff-base intermediate with substrate; via pyruvic acid; for decarboxylase activity is Ser258. Residue Ser258 is modified to Pyruvic acid (Ser); by autocatalysis.

It belongs to the phosphatidylserine decarboxylase family. PSD-B subfamily. Prokaryotic type II sub-subfamily. As to quaternary structure, heterodimer of a large membrane-associated beta subunit and a small pyruvoyl-containing alpha subunit. Pyruvate serves as cofactor. Is synthesized initially as an inactive proenzyme. Formation of the active enzyme involves a self-maturation process in which the active site pyruvoyl group is generated from an internal serine residue via an autocatalytic post-translational modification. Two non-identical subunits are generated from the proenzyme in this reaction, and the pyruvate is formed at the N-terminus of the alpha chain, which is derived from the carboxyl end of the proenzyme. The autoendoproteolytic cleavage occurs by a canonical serine protease mechanism, in which the side chain hydroxyl group of the serine supplies its oxygen atom to form the C-terminus of the beta chain, while the remainder of the serine residue undergoes an oxidative deamination to produce ammonia and the pyruvoyl prosthetic group on the alpha chain. During this reaction, the Ser that is part of the protease active site of the proenzyme becomes the pyruvoyl prosthetic group, which constitutes an essential element of the active site of the mature decarboxylase.

The protein resides in the cell membrane. The enzyme catalyses a 1,2-diacyl-sn-glycero-3-phospho-L-serine + H(+) = a 1,2-diacyl-sn-glycero-3-phosphoethanolamine + CO2. It participates in phospholipid metabolism; phosphatidylethanolamine biosynthesis; phosphatidylethanolamine from CDP-diacylglycerol: step 2/2. Catalyzes the formation of phosphatidylethanolamine (PtdEtn) from phosphatidylserine (PtdSer). The polypeptide is Phosphatidylserine decarboxylase proenzyme (Chlamydia felis (strain Fe/C-56) (Chlamydophila felis)).